We begin with the raw amino-acid sequence, 146 residues long: MATPEASGSGRNGQGSDPAVTYYRLEEVAKRNTAEETWMVIHGRVYDITRFLSEHPGGEEVLLEQAGADATESFEDVGHSPDAREMLKQYYIGDVHPNDLKPKDGDKDPSKNNSCQSSWAYWIVPIVGAILIGFLYRHFWADSKSS.

A propeptide spanning residues 1 to 11 is cleaved from the precursor; the sequence is MATPEASGSGR. The region spanning 20 to 96 is the Cytochrome b5 heme-binding domain; sequence VTYYRLEEVA…LKQYYIGDVH (77 aa). An N6-acetyllysine modification is found at Lys-30. Heme is bound by residues His-55 and His-79. Ser-80 carries the phosphoserine modification. Residues 119–136 traverse the membrane as a helical segment; it reads WAYWIVPIVGAILIGFLY.

It belongs to the cytochrome b5 family. As to quaternary structure, component of a complex composed of cytochrome b5, NADH-cytochrome b5 reductase (CYB5R3) and MTARC2.

It is found in the mitochondrion outer membrane. Functionally, cytochrome b5 is a membrane-bound hemoprotein functioning as an electron carrier for several membrane-bound oxygenases. The protein is Cytochrome b5 type B (Cyb5b) of Rattus norvegicus (Rat).